Reading from the N-terminus, the 271-residue chain is Acetyl-coenzyme A carboxylase carboxyl transferase subunit alpha (271 aa).

Residues 1-247 (MSRELIRTAD…KKTILEALGE (247 aa)) enclose the CoA carboxyltransferase C-terminal domain.

The protein belongs to the AccA family. As to quaternary structure, acetyl-CoA carboxylase is a heterohexamer composed of biotin carboxyl carrier protein (AccB), biotin carboxylase (AccC) and two subunits each of ACCase subunit alpha (AccA) and ACCase subunit beta (AccD).

It is found in the cytoplasm. It carries out the reaction N(6)-carboxybiotinyl-L-lysyl-[protein] + acetyl-CoA = N(6)-biotinyl-L-lysyl-[protein] + malonyl-CoA. It functions in the pathway lipid metabolism; malonyl-CoA biosynthesis; malonyl-CoA from acetyl-CoA: step 1/1. Functionally, component of the acetyl coenzyme A carboxylase (ACC) complex. First, biotin carboxylase catalyzes the carboxylation of biotin on its carrier protein (BCCP) and then the CO(2) group is transferred by the carboxyltransferase to acetyl-CoA to form malonyl-CoA. In Clostridium perfringens (strain ATCC 13124 / DSM 756 / JCM 1290 / NCIMB 6125 / NCTC 8237 / Type A), this protein is Acetyl-coenzyme A carboxylase carboxyl transferase subunit alpha.